Here is a 154-residue protein sequence, read N- to C-terminus: Xanthine-guanine phosphoribosyltransferase (154 aa).

Residues 37-38 (RG), Arg-69, and 88-96 (EDLVDSGDT) each bind 5-phospho-alpha-D-ribose 1-diphosphate. Residue Arg-69 coordinates GMP. Asp-89 is a binding site for Mg(2+). Residues Asp-92 and Ile-135 each contribute to the guanine site. Xanthine is bound by residues Asp-92 and Ile-135. GMP contacts are provided by residues 92–96 (DSGDT) and 134–135 (WI).

The protein belongs to the purine/pyrimidine phosphoribosyltransferase family. XGPT subfamily. As to quaternary structure, homotetramer. It depends on Mg(2+) as a cofactor.

Its subcellular location is the cell inner membrane. It catalyses the reaction GMP + diphosphate = guanine + 5-phospho-alpha-D-ribose 1-diphosphate. It carries out the reaction XMP + diphosphate = xanthine + 5-phospho-alpha-D-ribose 1-diphosphate. The catalysed reaction is IMP + diphosphate = hypoxanthine + 5-phospho-alpha-D-ribose 1-diphosphate. The protein operates within purine metabolism; GMP biosynthesis via salvage pathway; GMP from guanine: step 1/1. Its pathway is purine metabolism; XMP biosynthesis via salvage pathway; XMP from xanthine: step 1/1. In terms of biological role, purine salvage pathway enzyme that catalyzes the transfer of the ribosyl-5-phosphate group from 5-phospho-alpha-D-ribose 1-diphosphate (PRPP) to the N9 position of the 6-oxopurines guanine and xanthine to form the corresponding ribonucleotides GMP (guanosine 5'-monophosphate) and XMP (xanthosine 5'-monophosphate), with the release of PPi. To a lesser extent, also acts on hypoxanthine. This chain is Xanthine-guanine phosphoribosyltransferase, found in Vibrio atlanticus (strain LGP32) (Vibrio splendidus (strain Mel32)).